The primary structure comprises 101 residues: Small ribosomal subunit protein uS14 (101 aa).

The protein belongs to the universal ribosomal protein uS14 family. Part of the 30S ribosomal subunit. Contacts proteins S3 and S10.

Binds 16S rRNA, required for the assembly of 30S particles and may also be responsible for determining the conformation of the 16S rRNA at the A site. The chain is Small ribosomal subunit protein uS14 from Shewanella amazonensis (strain ATCC BAA-1098 / SB2B).